The sequence spans 516 residues: Bifunctional purine biosynthesis protein PurH (516 aa).

The 149-residue stretch at 1 to 149 (MSERQPIRRA…KNHANVAVLT (149 aa)) folds into the MGS-like domain.

The protein belongs to the PurH family.

The catalysed reaction is (6R)-10-formyltetrahydrofolate + 5-amino-1-(5-phospho-beta-D-ribosyl)imidazole-4-carboxamide = 5-formamido-1-(5-phospho-D-ribosyl)imidazole-4-carboxamide + (6S)-5,6,7,8-tetrahydrofolate. It carries out the reaction IMP + H2O = 5-formamido-1-(5-phospho-D-ribosyl)imidazole-4-carboxamide. It functions in the pathway purine metabolism; IMP biosynthesis via de novo pathway; 5-formamido-1-(5-phospho-D-ribosyl)imidazole-4-carboxamide from 5-amino-1-(5-phospho-D-ribosyl)imidazole-4-carboxamide (10-formyl THF route): step 1/1. The protein operates within purine metabolism; IMP biosynthesis via de novo pathway; IMP from 5-formamido-1-(5-phospho-D-ribosyl)imidazole-4-carboxamide: step 1/1. This Cutibacterium acnes (strain DSM 16379 / KPA171202) (Propionibacterium acnes) protein is Bifunctional purine biosynthesis protein PurH.